Here is a 474-residue protein sequence, read N- to C-terminus: MTIFERSKKGRKAFRLPESDIPEYSLPNRFLRRTPPELPEVSEPDVVRHYTDLARKNYSVDRGIYPLGSCTMKYNPKLNEKVANLEGFREIHPYQPAETVQGSLRLMYELKEMLCEITGMDDMTLQPAAGAHGELTGMLIVREYFKSRGDTGRKKVLVPDSAHGTNPASASMVGFEVVEIKSKNGMVDVEDLKKLLDEEVAAVMLTNPNTLGLFEKDILKIAEMTHECGALLYYDGANLNAVMGKVRPGDMGFDIVHLNLHKTFSTPHGMGGPGSGPVGVKKHLVDFLPFPQVRKNGELYELFVPEKTIGRVRSFFGNFPVLVKAYTYILTMGRDGLERVSEMAVLNANYLKKKIEKFLEIPYNGFCMHEFVASAEKVFRETGVRTLDIAKRILDFGVHPPTVYFPLIVLEALMIEPTETENKETLDKYAEILERVVKEAYENPDVLKNAPHNTPVRRVDEVLASKKPVFRWRG.

Position 262 is an N6-(pyridoxal phosphate)lysine (Lys-262).

This sequence belongs to the GcvP family. C-terminal subunit subfamily. In terms of assembly, the glycine cleavage system is composed of four proteins: P, T, L and H. In this organism, the P 'protein' is a heterodimer of two subunits. Requires pyridoxal 5'-phosphate as cofactor.

The catalysed reaction is N(6)-[(R)-lipoyl]-L-lysyl-[glycine-cleavage complex H protein] + glycine + H(+) = N(6)-[(R)-S(8)-aminomethyldihydrolipoyl]-L-lysyl-[glycine-cleavage complex H protein] + CO2. Its function is as follows. The glycine cleavage system catalyzes the degradation of glycine. The P protein binds the alpha-amino group of glycine through its pyridoxal phosphate cofactor; CO(2) is released and the remaining methylamine moiety is then transferred to the lipoamide cofactor of the H protein. The protein is Probable glycine dehydrogenase (decarboxylating) subunit 2 of Thermotoga petrophila (strain ATCC BAA-488 / DSM 13995 / JCM 10881 / RKU-1).